Here is a 146-residue protein sequence, read N- to C-terminus: Hemoglobin subunit beta (146 aa).

An N-acetylvaline modification is found at valine 1. In terms of domain architecture, Globin spans histidine 2–histidine 146. Residue serine 44 is modified to Phosphoserine. Lysine 59 carries the post-translational modification N6-acetyllysine. Histidine 63 contacts heme b. Lysine 82 bears the N6-acetyllysine mark. Heme b is bound at residue histidine 92. Cysteine 93 carries the S-nitrosocysteine modification. Lysine 144 carries the N6-acetyllysine modification.

It belongs to the globin family. In terms of assembly, heterotetramer of two alpha chains and two beta chains. In terms of tissue distribution, red blood cells.

Its function is as follows. Involved in oxygen transport from the lung to the various peripheral tissues. The polypeptide is Hemoglobin subunit beta (Tamiasciurus hudsonicus (American red squirrel)).